A 159-amino-acid chain; its full sequence is Transcription antitermination protein NusB (159 aa).

Belongs to the NusB family.

In terms of biological role, involved in transcription antitermination. Required for transcription of ribosomal RNA (rRNA) genes. Binds specifically to the boxA antiterminator sequence of the ribosomal RNA (rrn) operons. The sequence is that of Transcription antitermination protein NusB from Stenotrophomonas maltophilia (strain K279a).